We begin with the raw amino-acid sequence, 415 residues long: Gamma-glutamyl phosphate reductase (415 aa).

Belongs to the gamma-glutamyl phosphate reductase family.

The protein localises to the cytoplasm. The catalysed reaction is L-glutamate 5-semialdehyde + phosphate + NADP(+) = L-glutamyl 5-phosphate + NADPH + H(+). Its pathway is amino-acid biosynthesis; L-proline biosynthesis; L-glutamate 5-semialdehyde from L-glutamate: step 2/2. Catalyzes the NADPH-dependent reduction of L-glutamate 5-phosphate into L-glutamate 5-semialdehyde and phosphate. The product spontaneously undergoes cyclization to form 1-pyrroline-5-carboxylate. This is Gamma-glutamyl phosphate reductase from Bacillus cereus (strain ATCC 10987 / NRS 248).